Here is a 105-residue protein sequence, read N- to C-terminus: Toxin ParE2 (105 aa).

Belongs to the RelE toxin family.

Its function is as follows. Toxic component of a type II toxin-antitoxin (TA) system. Its toxic effect is neutralized by coexpression with cognate antitoxin ParD2. This Mycobacterium tuberculosis (strain CDC 1551 / Oshkosh) protein is Toxin ParE2 (parE2).